A 342-amino-acid chain; its full sequence is GTPase Obg (342 aa).

The 159-residue stretch at 1–159 (MQFIDQAKIE…KQLRLELKLL (159 aa)) folds into the Obg domain. Residues 160–330 (AEVGIIGLPN…MLQEIWGILD (171 aa)) form the OBG-type G domain. GTP-binding positions include 166–173 (GLPNAGKS), 191–195 (FTTLI), 213–216 (DIPG), 280–283 (NKID), and 311–313 (SAV). 2 residues coordinate Mg(2+): Ser-173 and Thr-193.

It belongs to the TRAFAC class OBG-HflX-like GTPase superfamily. OBG GTPase family. In terms of assembly, monomer. It depends on Mg(2+) as a cofactor.

The protein resides in the cytoplasm. An essential GTPase which binds GTP, GDP and possibly (p)ppGpp with moderate affinity, with high nucleotide exchange rates and a fairly low GTP hydrolysis rate. Plays a role in control of the cell cycle, stress response, ribosome biogenesis and in those bacteria that undergo differentiation, in morphogenesis control. The polypeptide is GTPase Obg (Nostoc punctiforme (strain ATCC 29133 / PCC 73102)).